Reading from the N-terminus, the 460-residue chain is MLRTCYVLCSQAGPPSRGWQSLSFDGGAFHLKGTGELTRALLVLRLCAWPPLVTHGLLLQAWSRRLLGSRLSGAFLRASVYGQFVAGETAEEVKGCVQQLRTLSLRPLLAVPTEEEPDSAAKSGEAWYEGNLGAMLRCVDLSRGLLEPPSLAEASLMQLKVTALTSTRLCKELASWVRRPGASLELSPERLAEAMDSGQNLQVSCLNAEQNQHLRASLSRLHRVAQYARAQHVRLLVDAEYTSLNPALSLLVAALAVRWNSPGEGGPWVWNTYQACLKDTFERLGRDAEAAHRAGLAFGVKLVRGAYLDKERAVAQLHGMEDPTQPDYEATSQSYSRCLELMLTHVARHGPMCHLMVASHNEESVRQATKRMWELGIPLDGTVCFGQLLGMCDHVSLALGQAGYVVYKSIPYGSLEEVIPYLIRRAQENRSVLQGARREQELLSQELWRRLLPGCRRIPH.

K310 carries the post-translational modification N6-acetyllysine.

Belongs to the proline oxidase family. It depends on FAD as a cofactor.

The enzyme catalyses trans-4-hydroxy-L-proline + a quinone = (3R,5S)-1-pyrroline-3-hydroxy-5-carboxylate + a quinol + H(+). The catalysed reaction is L-proline + a quinone = (S)-1-pyrroline-5-carboxylate + a quinol + H(+). With respect to regulation, hydroproxyproline dehydrogenase activity is inhibited by THFA,(1R,3R)3-OH-cyclopentane-COOH and 5-OH-1H-pyrazole-3-COOH. In terms of biological role, dehydrogenase that converts trans-4-L-hydroxyproline to delta-1-pyrroline-3-hydroxy-5-carboxylate (Hyp) using ubiquinone-10 as the terminal electron acceptor. Can also use proline as a substrate but with a very much lower efficiency. Does not react with other diastereomers of Hyp: trans-4-D-hydroxyproline and cis-4-L-hydroxyproline. Ubiquininone analogs such as menadione, duroquinone and ubiquinone-1 react more efficiently than oxygen as the terminal electron acceptor during catalysis. The chain is Hydroxyproline dehydrogenase from Homo sapiens (Human).